The sequence spans 513 residues: NAD(P)H-quinone oxidoreductase subunit 2, chloroplastic (513 aa).

Helical transmembrane passes span N11 to I31, S38 to F58, G78 to S98, F112 to L132, V133 to A153, L167 to L187, F219 to I239, P256 to T276, W290 to A310, M318 to N338, Y348 to L368, A389 to F409, H422 to L442, and L478 to I498.

This sequence belongs to the complex I subunit 2 family. NDH is composed of at least 16 different subunits, 5 of which are encoded in the nucleus.

It is found in the plastid. It localises to the chloroplast thylakoid membrane. The catalysed reaction is a plastoquinone + NADH + (n+1) H(+)(in) = a plastoquinol + NAD(+) + n H(+)(out). The enzyme catalyses a plastoquinone + NADPH + (n+1) H(+)(in) = a plastoquinol + NADP(+) + n H(+)(out). In terms of biological role, NDH shuttles electrons from NAD(P)H:plastoquinone, via FMN and iron-sulfur (Fe-S) centers, to quinones in the photosynthetic chain and possibly in a chloroplast respiratory chain. The immediate electron acceptor for the enzyme in this species is believed to be plastoquinone. Couples the redox reaction to proton translocation, and thus conserves the redox energy in a proton gradient. This Staurastrum punctulatum (Green alga) protein is NAD(P)H-quinone oxidoreductase subunit 2, chloroplastic.